Reading from the N-terminus, the 83-residue chain is U20-theraphotoxin-Cg1a 1 (83 aa).

The first 21 residues, 1-21, serve as a signal peptide directing secretion; sequence MKVSVLITLAVLGVMFVWTSA. The propeptide occupies 22–47; the sequence is AELEERGSDQPAWLKSLERIFQSEER. Intrachain disulfides connect Cys-49/Cys-63, Cys-56/Cys-68, and Cys-62/Cys-76.

The protein belongs to the neurotoxin 10 (Hwtx-1) family. 40 (Jztx-35) subfamily. Expressed by the venom gland.

Its subcellular location is the secreted. Its function is as follows. Probable ion channel inhibitor. This Chilobrachys guangxiensis (Chinese earth tiger tarantula) protein is U20-theraphotoxin-Cg1a 1.